Here is a 439-residue protein sequence, read N- to C-terminus: MSNYFDKIEKVKYEGADSTNPFAFKHYNPNEVILGKTMAEHLRLAVCYWHTFCWTGNDMFGVGSLDRSWQKTGDLLEGAKQKAEIAFEFFQKLGIPYYCFHDVDIAPEGNSYKEYVHNFHTMVDILEKKQAETGVKLLWGTANCFTNPRYMSGASTNPNPEVFSWAASQVFNAMNATKRLGGENYVLWGGREGYETLLNTDLKREREQIGRFMQMVVEHKHKIGFNGTLLIEPKPQEPTKHQYDYDVATVYGFLKQFGLEKEIKVNIEANHATLAGHTFQHEIATAAALDIFGSIDANRGDPQLGWDTDQFPNSVEENTLVMYEILKAGGFTTGGFNFDAKIRRQSTDPYDLFHGHIGAIDVLALSLKRAAKMIEDKTLQGIVDQRYAGWNGDLGQQILAGKASLEDLAKIVESKALDPKPVSGQQEYLENLVNNYIYR.

Catalysis depends on residues His-101 and Asp-104. The Mg(2+) site is built by Glu-232, Glu-268, His-271, Asp-296, Asp-307, Asp-309, and Asp-339.

The protein belongs to the xylose isomerase family. In terms of assembly, homotetramer. Mg(2+) serves as cofactor.

The protein localises to the cytoplasm. The enzyme catalyses alpha-D-xylose = alpha-D-xylulofuranose. This Actinobacillus pleuropneumoniae serotype 5b (strain L20) protein is Xylose isomerase.